Reading from the N-terminus, the 563-residue chain is Serine palmitoyltransferase 3 (563 aa).

A compositionally biased stretch (polar residues) spans 1-29; the sequence is MANLNDSAVTNGTLHNPKTQQGKRQSTGC. Residues 1–32 are disordered; it reads MANLNDSAVTNGTLHNPKTQQGKRQSTGCVKN. Residues 59 to 79 form a helical membrane-spanning segment; it reads PLYVYVLTYMGYGIGILFGYL. The residue at position 371 (Lys-371) is an N6-(pyridoxal phosphate)lysine.

The protein belongs to the class-II pyridoxal-phosphate-dependent aminotransferase family. In terms of assembly, component of the serine palmitoyltransferase (SPT) complex, which is composed of SPTLC1, SPTLC2 or SPTLC3 and SPTSSA or SPTSSB. The heterodimer consisting of SPTLC1 and SPTLC2/SPTLC3 forms the catalytic core of the enzyme, while SPTSSA or SPTSSB subunits determine substrate specificity. SPT also interacts with ORMDL proteins, especially ORMDL3, which negatively regulate SPT activity in the presence of ceramides. Pyridoxal 5'-phosphate serves as cofactor. Expressed in white and brown adipose tissues.

It is found in the endoplasmic reticulum membrane. The catalysed reaction is L-serine + hexadecanoyl-CoA + H(+) = 3-oxosphinganine + CO2 + CoA. It carries out the reaction dodecanoyl-CoA + L-serine + H(+) = 3-oxotetradecasphinganine + CO2 + CoA. The enzyme catalyses tetradecanoyl-CoA + L-serine + H(+) = 3-oxohexadecasphinganine + CO2 + CoA. It catalyses the reaction octadecanoyl-CoA + L-serine + H(+) = 3-oxoeicosasphinganine + CO2 + CoA. The protein operates within lipid metabolism; sphingolipid metabolism. With respect to regulation, SPT complex catalytic activity is negatively regulated by ORMDL proteins, including ORMDL3, in the presence of ceramides. This mechanism allows to maintain ceramide levels at sufficient concentrations for the production of complex sphingolipids, but which prevents the accumulation of ceramides to levels that trigger apoptosis. Functionally, component of the serine palmitoyltransferase multisubunit enzyme (SPT) that catalyzes the initial and rate-limiting step in sphingolipid biosynthesis by condensing L-serine and activated acyl-CoA (most commonly palmitoyl-CoA) to form long-chain bases. The SPT complex is composed of SPTLC1, SPTLC2 or SPTLC3 and SPTSSA or SPTSSB. Within this complex, the heterodimer consisting of SPTLC1 and SPTLC2/SPTLC3 forms the catalytic core. The composition of the serine palmitoyltransferase (SPT) complex determines the substrate preference. The SPTLC1-SPTLC2-SPTSSA complex shows a strong preference for C16-CoA substrate, while the SPTLC1-SPTLC3-SPTSSA isozyme uses both C14-CoA and C16-CoA as substrates, with a slight preference for C14-CoA. The SPTLC1-SPTLC2-SPTSSB complex shows a strong preference for C18-CoA substrate, while the SPTLC1-SPTLC3-SPTSSB isozyme displays an ability to use a broader range of acyl-CoAs, without apparent preference. This is Serine palmitoyltransferase 3 from Mus musculus (Mouse).